The sequence spans 203 residues: E3 ubiquitin-protein ligase RNF152 (203 aa).

Residues 12 to 55 (CQICFNYYSPRRRPKLLDCKHTCCSVCLQQMRTSQKDVRCPWCR) form an RING-type zinc finger. Residues 106–165 (ISKERTLLPGDMGCRLLPGSQQKSLTVVTIPAEQQPLQGGAPPEAVEEEPDRRGVVKSST) are necessary for interaction with RRAGA. Residues 139–158 (QQPLQGGAPPEAVEEEPDRR) are disordered. A helical membrane pass occupies residues 167–187 (SGVCTVILVACVLVFLLGIVL).

It belongs to the RNF152 family. As to quaternary structure, interacts with RRAGA (inactive GDP-bound form); stimulated by amino acid starvation. Interacts with SEC16A. Post-translationally, ubiquitinated. Autoubiquitinated in vitro, leading to its degradation by the proteasome.

It localises to the lysosome membrane. It carries out the reaction S-ubiquitinyl-[E2 ubiquitin-conjugating enzyme]-L-cysteine + [acceptor protein]-L-lysine = [E2 ubiquitin-conjugating enzyme]-L-cysteine + N(6)-ubiquitinyl-[acceptor protein]-L-lysine.. It participates in protein modification; protein ubiquitination. In terms of biological role, E3 ubiquitin-protein ligase that acts as a negative regulator of mTORC1 signaling by mediating ubiquitination of RagA/RRAGA and RHEB. Catalyzes 'Lys-63'-linked polyubiquitination of RagA/RRAGA in response to amino acid starvation, thereby regulating mTORC1 signaling. Also mediates monoubiquitination of RHEB, promoting its association with the TSC-TBC complex and subsequent inhibition. Also mediates 'Lys-48'-linked polyubiquitination of target proteins and their subsequent targeting to the proteasome for degradation. Induces apoptosis when overexpressed. The protein is E3 ubiquitin-protein ligase RNF152 of Mus musculus (Mouse).